We begin with the raw amino-acid sequence, 100 residues long: Suppressor of silencing 2b (100 aa).

Positions 22–27 match the Nuclear localization signal motif; the sequence is KRRRRR.

This sequence belongs to the cucumovirus/ilarvirus protein 2b family. In terms of assembly, homotetramer. Interacts with host AGO1; this interaction blocks AGO1 cleavage activity to attenuate RNA silencing and thus counter host defense. Interacts with host JAZ.

It is found in the host nucleus. Functionally, multifunctional protein that plays two independent roles: viral suppressor of host RNAi (VSR) and viral inducer of host attractiveness to insect vectors (VIA). Acts as a suppressor of RNA-mediated gene silencing, also known as post-transcriptional gene silencing (PTGS), a mechanism of plant viral defense that limits the accumulation of viral RNAs. May directly interfere with mobile silencing signaling. Also inhibits signal transduction by the phytohormone jasmonate, making the infected plant more attractive to aphids, which are the second host to play a role as a dissemination vector. Acts by binding to and inhibiting JAZ degradation in the host. This chain is Suppressor of silencing 2b, found in Cucumis sativus (Cucumber).